The primary structure comprises 211 residues: Peroxiredoxin (211 aa).

Positions 2-156 constitute a Thioredoxin domain; sequence PLIGDKFPEM…IVRMIRAFRV (155 aa). Cysteine 44 (cysteine sulfenic acid (-SOH) intermediate) is an active-site residue. Residue arginine 119 coordinates substrate. A disulfide bridge connects residues cysteine 198 and cysteine 204.

The protein belongs to the peroxiredoxin family. Prx6 subfamily. Homodecamer. Pentamer of dimers that assemble into a ring structure.

The protein localises to the cytoplasm. It catalyses the reaction a hydroperoxide + [thioredoxin]-dithiol = an alcohol + [thioredoxin]-disulfide + H2O. In terms of biological role, thiol-specific peroxidase that catalyzes the reduction of hydrogen peroxide and organic hydroperoxides to water and alcohols, respectively. Plays a role in cell protection against oxidative stress by detoxifying peroxides. The chain is Peroxiredoxin from Methanothermobacter marburgensis (strain ATCC BAA-927 / DSM 2133 / JCM 14651 / NBRC 100331 / OCM 82 / Marburg) (Methanobacterium thermoautotrophicum).